Reading from the N-terminus, the 163-residue chain is Peptidyl-prolyl cis-trans isomerase-like 1 (163 aa).

The 155-residue stretch at 1 to 155 (MATDVAVETT…TEVKIVKARV (155 aa)) folds into the PPIase cyclophilin-type domain.

It belongs to the cyclophilin-type PPIase family. PPIL1 subfamily.

It carries out the reaction [protein]-peptidylproline (omega=180) = [protein]-peptidylproline (omega=0). Functionally, PPIases accelerate the folding of proteins. It catalyzes the cis-trans isomerization of proline imidic peptide bonds in oligopeptides. This chain is Peptidyl-prolyl cis-trans isomerase-like 1 (ppi-1), found in Neurospora crassa (strain ATCC 24698 / 74-OR23-1A / CBS 708.71 / DSM 1257 / FGSC 987).